The sequence spans 621 residues: uncharacterized protein (621 aa).

Belongs to the chlamydial CPn_0512/CT_425/TC_0708 family.

This is an uncharacterized protein from Chlamydia muridarum (strain MoPn / Nigg).